Here is a 292-residue protein sequence, read N- to C-terminus: UPF0749 protein Mb1856 (292 aa).

A signal peptide spans 1–28 (MSENRPEPVAAETSAATTARHSQADAGA). The segment at 1–30 (MSENRPEPVAAETSAATTARHSQADAGAHD) is disordered. 3 helical membrane-spanning segments follow: residues 68–88 (VFGT…VTQV), 152–172 (AALS…MITI), and 229–249 (VLSP…AAAM).

Belongs to the UPF0749 family.

Its subcellular location is the cell membrane. In Mycobacterium bovis (strain ATCC BAA-935 / AF2122/97), this protein is UPF0749 protein Mb1856.